The sequence spans 258 residues: UPF0246 protein Jann_0444 (258 aa).

This sequence belongs to the UPF0246 family.

This chain is UPF0246 protein Jann_0444, found in Jannaschia sp. (strain CCS1).